The primary structure comprises 178 residues: N-alpha-acetyltransferase 20 (178 aa).

One can recognise an N-acetyltransferase domain in the interval 2–157 (TTLRAFTCDD…DAYDMRKALS (156 aa)). Positions 159 to 178 (DTEKKSIVPLPHPVRPEDIE) are disordered.

Belongs to the acetyltransferase family. ARD1 subfamily. As to quaternary structure, component of the N-terminal acetyltransferase B (NatB) complex which is composed of naa20 and naa25.

It localises to the cytoplasm. It is found in the nucleus. It catalyses the reaction N-terminal L-methionyl-L-asparaginyl-[protein] + acetyl-CoA = N-terminal N(alpha)-acetyl-L-methionyl-L-asparaginyl-[protein] + CoA + H(+). It carries out the reaction N-terminal L-methionyl-L-glutaminyl-[protein] + acetyl-CoA = N-terminal N(alpha)-acetyl-L-methionyl-L-glutaminyl-[protein] + CoA + H(+). The catalysed reaction is N-terminal L-methionyl-L-aspartyl-[protein] + acetyl-CoA = N-terminal N(alpha)-acetyl-L-methionyl-L-aspartyl-[protein] + CoA + H(+). The enzyme catalyses N-terminal L-methionyl-L-glutamyl-[protein] + acetyl-CoA = N-terminal N(alpha)-acetyl-L-methionyl-L-glutamyl-[protein] + CoA + H(+). Functionally, catalytic subunit of the NatB complex which catalyzes acetylation of the N-terminal methionine residues of peptides beginning with Met-Asp, Met-Glu, Met-Asn and Met-Gln. Proteins with cell cycle functions are overrepresented in the pool of NatB substrates. Required for maintaining the structure and function of actomyosin fibers and for proper cellular migration. The sequence is that of N-alpha-acetyltransferase 20 (naa20) from Xenopus laevis (African clawed frog).